The chain runs to 230 residues: Potassium/proton antiporter CemA (230 aa).

Transmembrane regions (helical) follow at residues 7–27 (LPSF…SFSF), 106–126 (IILH…SFFL), 145–165 (LNDS…VGFH), and 181–201 (LGWA…PVIL).

Belongs to the CemA family.

The protein localises to the plastid. Its subcellular location is the chloroplast inner membrane. It catalyses the reaction K(+)(in) + H(+)(out) = K(+)(out) + H(+)(in). Functionally, contributes to K(+)/H(+) antiport activity by supporting proton efflux to control proton extrusion and homeostasis in chloroplasts in a light-dependent manner to modulate photosynthesis. Prevents excessive induction of non-photochemical quenching (NPQ) under continuous-light conditions. Indirectly promotes efficient inorganic carbon uptake into chloroplasts. The polypeptide is Potassium/proton antiporter CemA (Zea mays (Maize)).